A 255-amino-acid chain; its full sequence is Imidazole glycerol phosphate synthase subunit HisF (255 aa).

Catalysis depends on residues Asp-11 and Asp-130.

Belongs to the HisA/HisF family. As to quaternary structure, heterodimer of HisH and HisF.

Its subcellular location is the cytoplasm. The catalysed reaction is 5-[(5-phospho-1-deoxy-D-ribulos-1-ylimino)methylamino]-1-(5-phospho-beta-D-ribosyl)imidazole-4-carboxamide + L-glutamine = D-erythro-1-(imidazol-4-yl)glycerol 3-phosphate + 5-amino-1-(5-phospho-beta-D-ribosyl)imidazole-4-carboxamide + L-glutamate + H(+). The protein operates within amino-acid biosynthesis; L-histidine biosynthesis; L-histidine from 5-phospho-alpha-D-ribose 1-diphosphate: step 5/9. Its function is as follows. IGPS catalyzes the conversion of PRFAR and glutamine to IGP, AICAR and glutamate. The HisF subunit catalyzes the cyclization activity that produces IGP and AICAR from PRFAR using the ammonia provided by the HisH subunit. The polypeptide is Imidazole glycerol phosphate synthase subunit HisF (Campylobacter jejuni (strain RM1221)).